The following is a 263-amino-acid chain: Expansin-like A3 (263 aa).

A signal peptide spans 1–20 (MRSFLYLIVVIFLFSSSVNA). The region spanning 41–147 (SGACAYGPMA…QRVPCNYGKR (107 aa)) is the Expansin-like EG45 domain. N-linked (GlcNAc...) asparagine glycans are attached at residues asparagine 99 and asparagine 102. One can recognise an Expansin-like CBD domain in the interval 161 to 243 (NYLAIKLLYQ…NWNSGRIYDA (83 aa)).

The protein belongs to the expansin family. Expansin-like A subfamily.

It is found in the secreted. The protein is Expansin-like A3 (EXLA3) of Arabidopsis thaliana (Mouse-ear cress).